Reading from the N-terminus, the 476-residue chain is ATP synthase subunit beta, chloroplastic (476 aa).

An ATP-binding site is contributed by Gly-155 to Thr-162.

Belongs to the ATPase alpha/beta chains family. In terms of assembly, F-type ATPases have 2 components, CF(1) - the catalytic core - and CF(0) - the membrane proton channel. CF(1) has five subunits: alpha(3), beta(3), gamma(1), delta(1), epsilon(1). CF(0) has four main subunits: a(1), b(1), b'(1) and c(9-12).

Its subcellular location is the plastid. The protein resides in the chloroplast thylakoid membrane. The catalysed reaction is ATP + H2O + 4 H(+)(in) = ADP + phosphate + 5 H(+)(out). In terms of biological role, produces ATP from ADP in the presence of a proton gradient across the membrane. The catalytic sites are hosted primarily by the beta subunits. In Emiliania huxleyi (Coccolithophore), this protein is ATP synthase subunit beta, chloroplastic.